The sequence spans 31 residues: MSDIN-like toxin proprotein 8 (31 aa).

Positions 1–10 (MSDINTARLP) are excised as a propeptide. The segment at residues 11 to 18 (CIGFLGIP) is a cross-link (cyclopeptide (Cys-Pro)). Residues 19–31 (SVGDDIEMVLRHG) constitute a propeptide that is removed on maturation.

Belongs to the MSDIN fungal toxin family. In terms of processing, processed by the macrocyclase-peptidase enzyme POPB to yield a toxic cyclic octapeptide. POPB first removes 10 residues from the N-terminus. Conformational trapping of the remaining peptide forces the enzyme to release this intermediate rather than proceed to macrocyclization. The enzyme rebinds the remaining peptide in a different conformation and catalyzes macrocyclization of the N-terminal 8 residues.

Its function is as follows. Probable toxin that belongs to the MSDIN-like toxin family responsible for a large number of food poisoning cases and deaths. The polypeptide is MSDIN-like toxin proprotein 8 (Amanita bisporigera (Destroying angel)).